A 910-amino-acid polypeptide reads, in one-letter code: MVEAIVSFGVEKLWDRLTQEYEQFQGVEDRIAELKSNLNLLKSFLKDAEAKKNTSQMVRHCVEEIKEIVYDTENMIETFILKEAARKRSGIIRRITKLTCIKVHRWEFASDIGGISKRISKVIQDMHSFGVQQMISDGSQSSHLLQEREREMRQTFSRGYESDFVGLEVNVKKLVGYLVEEDDIQIVSVTGMGGLGKTTLARQVFNHEDVKHQFDRLAWVCVSQEFTRKNVWQMILQNLTSRETKDEILQMEEAELHDELFQLLETSKSLIVFDDIWKEEDWGLINPIFPPKKGWKVLITSRTETIAMHGNRRYVNFKPECLTILESWILFQRIAMPRVDESEFKVDKEMEMMGKQMIKYCGGLPLAVKVLGGLLAAKYTFHDWKRLSENIGCHIVGRTDFSDGNNSSVYHVLSLSFEELPSYLKHCFLYLAHFPEDHNIKVEKLSYCWAAEGILEPRHYHGQTIRDVGESYIEELVRRNMVIAERDVTTLRFEACHLHDMMREVCLLKAKEENFVQIASILPPTANSQYPGTSRRFVSQNPTTLHVSRDINNPKLQSLLIVWENRRKSWKLLGSSFIRLELLRVLDLYKAKFEGRNLPSGIGKLIHLRYLNLDLARVSRLPSSLGNLRLLIYLDINVCTKSLFVPNCLMGMHELRYLRLPFNTSKEIKLGLCNLVNLETLENFSTENSSLEDLRGMVSLRTLTIGLFKHISKETLFASILGMRHLENLSIRTPDGSSKFKRIMEDGIVLDAIHLKQLNLRLYMPKLPDEQHFPSHLTSISLDGCCLVEDPLPILEKLLELKEVRLDFRAFCGKRMVSSDGGFPQLHRLYIWGLAEWEEWIVEEGSMPRLHTLTIWNCQKLKQLPDGLRFIYSIKDLDMDKKWKEILSEGGEEYYKVQHIPSVKFEKDYK.

A coiled-coil region spans residues 15-57 (DRLTQEYEQFQGVEDRIAELKSNLNLLKSFLKDAEAKKNTSQM). The NB-ARC domain occupies 148–460 (REREMRQTFS…AEGILEPRHY (313 aa)). Residue 191-198 (GMGGLGKT) coordinates ATP. LRR repeat units follow at residues 580–604 (LELL…GIGK) and 605–628 (LIHL…LGNL).

The protein belongs to the disease resistance NB-LRR family.

Functionally, potential disease resistance protein. This is Putative disease resistance protein At1g58400 from Arabidopsis thaliana (Mouse-ear cress).